The sequence spans 408 residues: E3 ubiquitin-protein ligase IE2 (408 aa).

Polar residues predominate over residues 1–10; the sequence is MSRQINAATP. 2 disordered regions span residues 1 to 67 and 176 to 199; these read MSRQ…ENVQ and QSPD…QSEP. Residues 13–25 show a composition bias toward basic residues; sequence SRRHRLSLSRRRI. A compositionally biased stretch (low complexity) spans 30–47; the sequence is SPEAQPSSSSRSQPSSSS. Tandem repeats lie at residues 34 to 41, 42 to 49, 51 to 54, and 55 to 58. The segment at 34 to 49 is 2 X 8 AA tandem repeats of Q-P-S-S-S-S-R-S; it reads QPSSSSRSQPSSSSRS. The segment at 51–58 is 2 X 4 AA tandem repeats of R-R-Q-E; sequence RRQERRQE. Residues 183–197 show a composition bias toward low complexity; sequence SPQSPQPQQQQQQQS. The RING-type zinc-finger motif lies at 207–255; that stretch reads CNICFTTFKDTKNVNSSFVTSIHCNHAVCFKCYVKIIMDNSVYKCFCSA.

Belongs to the alphabaculovirus IE2 protein family. As to quaternary structure, homooligomer. Post-translationally, auto-ubiquitinated.

It localises to the host nucleus. It catalyses the reaction S-ubiquitinyl-[E2 ubiquitin-conjugating enzyme]-L-cysteine + [acceptor protein]-L-lysine = [E2 ubiquitin-conjugating enzyme]-L-cysteine + N(6)-ubiquitinyl-[acceptor protein]-L-lysine.. Its function is as follows. RING-finger E3 ubiquitin ligase that plays an important regulatory role during the initial stages of infection. Migrates to specific nuclear foci early in infection supposely to prepare the sites for viral transcription and replication by targeting and ubiquitinating host proteins. Acts as a transcriptional activator and activates a number of viral promoters including itself, IE1 and the promoter of 39K gene. The sequence is that of E3 ubiquitin-protein ligase IE2 (IE2) from Lepidoptera (butterflies and moths).